The following is a 423-amino-acid chain: MDSGVWAACIFCLLSSLPVALGHVHPECDFITQLREDERTCLQAADRMANSSSGCPRTWDGLLCWPTAGPGEWVTLPCPAFFSHFSSEPGALKRDCTTTGWSEPFPPYPEACPVPLELLTDEKSYFSTVRIVYTTGHSVSAVALFVAIAILVALRRLHCPRNYIHSQLFATFILKAGAVFLKDAALFHSENTDHCSFSTVLCKVSVATSHFATMTNFSWLLAEAVYLTCLLASTSPSTRRAFWWLVLAGWGLPLLFTGTWVGCKLAFEDVACWDLDDSSPYWWIIKGPIVLSVGVNFGLFLNIIRILLRKLEPAQGSLHTQPQYWRLSKSTLLLIPLFGIHYVIFNFLPDSAGLGIRLPLELGLGSFQGFIVAILYCFLNQEVRTEISRRWHGHDPELLPAWRTHAKWAKPSRSRAKVLTTVC.

An N-terminal signal peptide occupies residues 1-22 (MDSGVWAACIFCLLSSLPVALG). At 23–130 (HVHPECDFIT…DEKSYFSTVR (108 aa)) the chain is on the extracellular side. 3 cysteine pairs are disulfide-bonded: Cys41/Cys64, Cys55/Cys96, and Cys78/Cys112. Asn50 is a glycosylation site (N-linked (GlcNAc...) asparagine). The chain crosses the membrane as a helical span at residues 131-151 (IVYTTGHSVSAVALFVAIAIL). Topologically, residues 152-167 (VALRRLHCPRNYIHSQ) are cytoplasmic. Residues 168–188 (LFATFILKAGAVFLKDAALFH) form a helical membrane-spanning segment. The Extracellular segment spans residues 189-210 (SENTDHCSFSTVLCKVSVATSH). Residues 211-231 (FATMTNFSWLLAEAVYLTCLL) form a helical membrane-spanning segment. The Cytoplasmic segment spans residues 232 to 240 (ASTSPSTRR). A helical transmembrane segment spans residues 241–261 (AFWWLVLAGWGLPLLFTGTWV). Over 262 to 283 (GCKLAFEDVACWDLDDSSPYWW) the chain is Extracellular. Residues 284–304 (IIKGPIVLSVGVNFGLFLNII) traverse the membrane as a helical segment. Over 305–331 (RILLRKLEPAQGSLHTQPQYWRLSKST) the chain is Cytoplasmic. A helical membrane pass occupies residues 332–352 (LLLIPLFGIHYVIFNFLPDSA). Topologically, residues 353–357 (GLGIR) are extracellular. A helical membrane pass occupies residues 358-378 (LPLELGLGSFQGFIVAILYCF). Residues 379–423 (LNQEVRTEISRRWHGHDPELLPAWRTHAKWAKPSRSRAKVLTTVC) are Cytoplasmic-facing.

It belongs to the G-protein coupled receptor 2 family. In terms of tissue distribution, pituitary gland. Also detected in the lymphocytes and thymocytes.

Its subcellular location is the cell membrane. Its function is as follows. Receptor for GRF, coupled to G proteins which activate adenylyl cyclase. Stimulates somatotroph cell growth, growth hormone gene transcription and growth hormone secretion. The protein is Growth hormone-releasing hormone receptor (GHRHR) of Sus scrofa (Pig).